The following is a 140-amino-acid chain: Ribonuclease P protein component (140 aa).

The protein belongs to the RnpA family. As to quaternary structure, consists of a catalytic RNA component (M1 or rnpB) and a protein subunit.

It catalyses the reaction Endonucleolytic cleavage of RNA, removing 5'-extranucleotides from tRNA precursor.. Its function is as follows. RNaseP catalyzes the removal of the 5'-leader sequence from pre-tRNA to produce the mature 5'-terminus. It can also cleave other RNA substrates such as 4.5S RNA. The protein component plays an auxiliary but essential role in vivo by binding to the 5'-leader sequence and broadening the substrate specificity of the ribozyme. This Nostoc sp. (strain PCC 7120 / SAG 25.82 / UTEX 2576) protein is Ribonuclease P protein component.